Consider the following 516-residue polypeptide: Calcitonin receptor (516 aa).

An N-terminal signal peptide occupies residues 1–24; it reads MRFLLLNRFTLLLLLLVSPTPVLQ. Residues 25–146 lie on the Extracellular side of the membrane; it reads APTNLTDSGL…FTPDKLHNAY (122 aa). 4 N-linked (GlcNAc...) asparagine glycosylation sites follow: N28, N73, N125, and N130. 3 disulfide bridges follow: C55/C81, C72/C112, and C95/C134. The helical transmembrane segment at 147–169 threads the bilayer; sequence VLYYLALVGHSMSIAALIASMGI. At 170–181 the chain is on the cytoplasmic side; sequence FLFFKNLSCQRV. The helical transmembrane segment at 182–202 threads the bilayer; sequence TLHKNMFLTYILNSIIIIIHL. Topologically, residues 203 to 256 are extracellular; the sequence is VEVVPNGDLVRRDPMHIFHHNTYMWTMQWELSPPLPLSAHEGKMDPHDSEVISC. An intrachain disulfide couples C256 to C326. A helical transmembrane segment spans residues 257 to 279; it reads KILHFFHQYMMACNYFWMLCEGI. Residues 280–296 lie on the Cytoplasmic side of the membrane; sequence YLHTLIVMAVFTEDQRL. A helical membrane pass occupies residues 297–317; that stretch reads RWYYLLGWGFPIVPTIIHAIT. Residues 318–333 are Extracellular-facing; the sequence is RAVYYNDNCWLSTETH. The chain crosses the membrane as a helical span at residues 334–357; sequence LLYIIHGPVMAALVVNFFFLLNIV. Topologically, residues 358 to 377 are cytoplasmic; sequence RVLVTKMRQTHEAEAYMYLK. The helical transmembrane segment at 378-396 threads the bilayer; sequence AVKATMVLVPLLGIQFVVF. Residues 397 to 404 lie on the Extracellular side of the membrane; the sequence is PWRPSNKV. A helical transmembrane segment spans residues 405–431; it reads LGKIYDYLMHSLIHFQGFFVATIYCFC. The Cytoplasmic segment spans residues 432 to 516; that stretch reads NHEVQVTLKR…MNVIQQDSSA (85 aa). The interval 489–516 is disordered; it reads RNPPVSNNEGEEGTEMIPMNVIQQDSSA.

It belongs to the G-protein coupled receptor 2 family. As to quaternary structure, heterodimer of CALCR and RAMP1, RAMP2 or RAMP3; the receptor complexes function as AMYR1, AMYR2 and AMYR3 receptors, respectively, and respond to amylin/IAPP, calcitonin/CT and CGRP1 ligands. Interacts with GPRASP2.

Its subcellular location is the cell membrane. Functionally, g protein-coupled receptor activated by ligand peptides amylin (IAPP), calcitonin (CT/CALCA) and calcitonin gene-related peptide type 1 (CGRP1/CALCA). CALCR interacts with receptor-activity-modifying proteins RAMP1, 2 and 3 to form receptor complexes AMYR1, 2 and 3, respectively. IAPP, CT and CGRP1 activate CALCR and AMYRs with distinct modes of receptor activation resulting in specific phenotypes. Ligand binding causes a conformation change that triggers signaling via guanine nucleotide-binding proteins (G proteins) and modulates the activity of downstream effectors. Activates cAMP-dependent pathway. This Rattus norvegicus (Rat) protein is Calcitonin receptor.